A 145-amino-acid chain; its full sequence is Mannitol-specific phosphotransferase enzyme IIA component (145 aa).

The PTS EIIA type-2 domain occupies E2 to A145. H62 serves as the catalytic Tele-phosphohistidine intermediate. The residue at position 62 (H62) is a Phosphohistidine; by HPr.

It is found in the cytoplasm. Functionally, the phosphoenolpyruvate-dependent sugar phosphotransferase system (sugar PTS), a major carbohydrate active transport system, catalyzes the phosphorylation of incoming sugar substrates concomitantly with their translocation across the cell membrane. The enzyme II CmtAB PTS system is involved in D-mannitol transport. This Enterococcus faecalis (strain ATCC 700802 / V583) protein is Mannitol-specific phosphotransferase enzyme IIA component.